The following is a 311-amino-acid chain: tRNA-cytidine(32) 2-sulfurtransferase (311 aa).

The PP-loop motif signature appears at 47-52 (SGGKDS). Positions 122, 125, and 213 each coordinate [4Fe-4S] cluster.

This sequence belongs to the TtcA family. Homodimer. Requires Mg(2+) as cofactor. The cofactor is [4Fe-4S] cluster.

The protein localises to the cytoplasm. It catalyses the reaction cytidine(32) in tRNA + S-sulfanyl-L-cysteinyl-[cysteine desulfurase] + AH2 + ATP = 2-thiocytidine(32) in tRNA + L-cysteinyl-[cysteine desulfurase] + A + AMP + diphosphate + H(+). Its pathway is tRNA modification. In terms of biological role, catalyzes the ATP-dependent 2-thiolation of cytidine in position 32 of tRNA, to form 2-thiocytidine (s(2)C32). The sulfur atoms are provided by the cysteine/cysteine desulfurase (IscS) system. The sequence is that of tRNA-cytidine(32) 2-sulfurtransferase from Escherichia coli O1:K1 / APEC.